A 676-amino-acid chain; its full sequence is Intraflagellar transport protein 81 homolog (676 aa).

An N-acetylserine modification is found at S2. The segment at 2–121 (SDQIKFIMDS…LKKRAYLARF (120 aa)) is CH (calponin-homology)-like region. T61 bears the Phosphothreonine mark. 4 coiled-coil regions span residues 132-258 (LQDE…ADAK), 306-389 (HSDL…FDGT), 416-456 (QIIA…KGIS), and 490-622 (VKKL…REKQ).

This sequence belongs to the IFT81 family. As to quaternary structure, component of the IFT complex B, at least composed of IFT20, IFT22, IFT25, IFT27, IFT46, IFT52, TRAF3IP1/IFT54, IFT57, IFT74, IFT80, IFT81, and IFT88. Interacts with IFT74; the interaction is direct: within the IFT complex B, IFT74 and IFT81 mediate the transport of tubulin within the cilium. Interacts with tubulin; the interaction is direct. Interacts with IFT57 and IFT70B. Interacts with RABL2/RABL2A; binding is equal in the presence of GTP or GDP. Interacts with IFT88. Interacts (via the IFT74/IFT81 heterodimer) with RABL2B. Interacts with CFAP61. In terms of tissue distribution, highly expressed in testis, moderately in ovary, heart, liver, skeletal muscle, kidney and pancreas, low in prostate, brain, placenta and lung and not detected in spleen, thymus, small intestine and colon. Isoform CDV-1R is abundantly expressed in testis.

It is found in the cell projection. Its subcellular location is the cilium. It localises to the cytoplasm. The protein localises to the cytoskeleton. The protein resides in the cilium basal body. Component of the intraflagellar transport (IFT) complex B: together with IFT74, forms a tubulin-binding module that specifically mediates transport of tubulin within the cilium. Binds tubulin via its CH (calponin-homology)-like region. Required for ciliogenesis. Required for proper regulation of SHH signaling. Plays an important role during spermatogenesis by modulating the assembly and elongation of the sperm flagella. This is Intraflagellar transport protein 81 homolog (IFT81) from Homo sapiens (Human).